A 106-amino-acid polypeptide reads, in one-letter code: uncharacterized protein (106 aa).

Residues 78–98 (LAITGYVVSIPIVLPILIIFI) form a helical membrane-spanning segment.

The protein localises to the membrane. This is an uncharacterized protein from Haemophilus influenzae (strain ATCC 51907 / DSM 11121 / KW20 / Rd).